Consider the following 588-residue polypeptide: ATP-dependent lipid A-core flippase (588 aa).

A run of 6 helical transmembrane segments spans residues 23 to 43, 56 to 76, 141 to 161, 162 to 182, 257 to 277, and 278 to 298; these read FWPVLLLGVLANILYSGIDAG, FITIDLDFVKQIPLIVLIGIT, DALTDFIQNICLVIGLLTVMM, VICWQLSLMFLLTIPFVGIIV, LVIAIGIAMIIMAAIHLSTVI, and TISAGSFLAIIAAMLQLIKPM. Residues 28–310 enclose the ABC transmembrane type-1 domain; that stretch reads LLGVLANILY…LTTLNATIQR (283 aa). The ABC transporter domain maps to 342–576; it reads IEFKHVYHAY…DGHYAQLYKV (235 aa). 375–382 contacts ATP; the sequence is GHSGSGKT.

This sequence belongs to the ABC transporter superfamily. Lipid exporter (TC 3.A.1.106) family. In terms of assembly, homodimer.

The protein resides in the cell inner membrane. The enzyme catalyses ATP + H2O + lipid A-core oligosaccharideSide 1 = ADP + phosphate + lipid A-core oligosaccharideSide 2.. Its function is as follows. Involved in lipopolysaccharide (LPS) biosynthesis. Translocates lipid A-core from the inner to the outer leaflet of the inner membrane. Transmembrane domains (TMD) form a pore in the inner membrane and the ATP-binding domain (NBD) is responsible for energy generation. The polypeptide is ATP-dependent lipid A-core flippase (Legionella pneumophila (strain Paris)).